The following is a 459-amino-acid chain: tRNA modification GTPase MnmE (459 aa).

(6S)-5-formyl-5,6,7,8-tetrahydrofolate contacts are provided by R24, E82, and K122. Residues 219 to 379 (GIKVVISGAP…LRQHLYFSFK (161 aa)) enclose the TrmE-type G domain. Residues 229–234 (NSGKSS), 248–254 (TNFPGTT), and 273–276 (DTAG) contribute to the GTP site. S233 and T254 together coordinate Mg(2+). K459 is a binding site for (6S)-5-formyl-5,6,7,8-tetrahydrofolate.

The protein belongs to the TRAFAC class TrmE-Era-EngA-EngB-Septin-like GTPase superfamily. TrmE GTPase family. Homodimer. Heterotetramer of two MnmE and two MnmG subunits. The cofactor is K(+).

It is found in the cytoplasm. Exhibits a very high intrinsic GTPase hydrolysis rate. Involved in the addition of a carboxymethylaminomethyl (cmnm) group at the wobble position (U34) of certain tRNAs, forming tRNA-cmnm(5)s(2)U34. The sequence is that of tRNA modification GTPase MnmE from Buchnera aphidicola subsp. Baizongia pistaciae (strain Bp).